The primary structure comprises 474 residues: MKRILVFLLAVAFVHALERGRDYEKDKVCKDLASLGREDFTSLSMVLYSRKFPSGTFEQISHLVNEVVSLTVTCCAEGADPDCYDNRTSALSDKSCESNSPFPVHPGTPECCTHEGLEKKLCMAALKHQPQEFPTYVEPTNDEICEAFRKDPKDFADRFMYEYSINYGQAPLTLLVGYTKSYLSMVGSCCTSPNPTVCFLKERLQLKHFSLLTIMTNRICSQYAAYGKEKSRLSHLIKFAQKVPTAHLEDVLPLAEDITTILSKCCDSVSEDCIKELPEYAVKLCDNLSTKNSKFKDCCQEKTPMEIFVCAYFMPASPNPELPDVKLPMNKDVCDEGNTKVLDQYIFELSRKTQIPEVFLTKILESTLKSLDECCHSESSTACLNAKGPQLTRELSSFIQKGQELCADYSENTFTEYKKKLAERLRGKFPDATETDLQELVAKRSDFASKCCSVNSPPLYCNSEIDAEINTLQS.

An N-terminal signal peptide occupies residues 1–16 (MKRILVFLLAVAFVHA). Albumin domains lie at 17–208 (LERG…QLKH), 209–393 (FSLL…QLTR), and 394–474 (ELSS…TLQS). Intrachain disulfides connect Cys-29/Cys-75 and Cys-74/Cys-83. Residue Asn-86 is glycosylated (N-linked (GlcNAc...) asparagine). Cystine bridges form between Cys-96–Cys-112, Cys-111–Cys-122, Cys-145–Cys-190, Cys-189–Cys-198, Cys-220–Cys-266, Cys-265–Cys-273, Cys-285–Cys-299, Cys-298–Cys-310, Cys-334–Cys-375, Cys-374–Cys-383, Cys-406–Cys-452, and Cys-451–Cys-461. Residue Asn-287 is glycosylated (N-linked (GlcNAc...) asparagine).

It belongs to the ALB/AFP/VDB family. As to quaternary structure, associates with membrane-bound immunoglobulin on the surface of B-lymphocytes and with IgG Fc receptor on the membranes of T-lymphocytes. Interacts with LRP2; the interaction is required for renal uptake of GC in complex with 25-hydroxyvitamin D3.

It is found in the secreted. Functionally, involved in vitamin D transport and storage, scavenging of extracellular G-actin, enhancement of the chemotactic activity of C5 alpha for neutrophils in inflammation and macrophage activation. The sequence is that of Vitamin D-binding protein (GC) from Bos taurus (Bovine).